The following is a 358-amino-acid chain: 3-dehydroquinate synthase (358 aa).

Residues 70–75 (DGEQYK), 104–108 (GVVGD), 128–129 (TT), Lys-141, Lys-150, and 168–171 (CLNT) contribute to the NAD(+) site. 3 residues coordinate Zn(2+): Glu-183, His-246, and His-263.

Belongs to the sugar phosphate cyclases superfamily. Dehydroquinate synthase family. It depends on Co(2+) as a cofactor. Requires Zn(2+) as cofactor. NAD(+) is required as a cofactor.

Its subcellular location is the cytoplasm. The enzyme catalyses 7-phospho-2-dehydro-3-deoxy-D-arabino-heptonate = 3-dehydroquinate + phosphate. It functions in the pathway metabolic intermediate biosynthesis; chorismate biosynthesis; chorismate from D-erythrose 4-phosphate and phosphoenolpyruvate: step 2/7. Its function is as follows. Catalyzes the conversion of 3-deoxy-D-arabino-heptulosonate 7-phosphate (DAHP) to dehydroquinate (DHQ). This is 3-dehydroquinate synthase from Shewanella sediminis (strain HAW-EB3).